We begin with the raw amino-acid sequence, 376 residues long: PqqA peptide cyclase (376 aa).

The Radical SAM core domain maps to 7–222 (VGLPLWLLAE…TNEYRDKLKA (216 aa)). [4Fe-4S] cluster contacts are provided by C21, C25, and C28.

This sequence belongs to the radical SAM superfamily. PqqE family. As to quaternary structure, interacts with PqqD. The interaction is necessary for activity of PqqE. It depends on [4Fe-4S] cluster as a cofactor.

It catalyses the reaction [PQQ precursor protein] + S-adenosyl-L-methionine = E-Y cross-linked-[PQQ precursor protein] + 5'-deoxyadenosine + L-methionine + H(+). It participates in cofactor biosynthesis; pyrroloquinoline quinone biosynthesis. Functionally, catalyzes the cross-linking of a glutamate residue and a tyrosine residue in the PqqA protein as part of the biosynthesis of pyrroloquinoline quinone (PQQ). This Pseudomonas putida (strain ATCC 47054 / DSM 6125 / CFBP 8728 / NCIMB 11950 / KT2440) protein is PqqA peptide cyclase.